Here is a 353-residue protein sequence, read N- to C-terminus: Photosystem II protein D1 (353 aa).

T2 is modified (N-acetylthreonine). T2 is modified (phosphothreonine). 3 helical membrane-spanning segments follow: residues 29-46 (YIGWFGVLMIPTLLTATS), 118-133 (HFLLGVACYMGREWEL), and 142-156 (WIAVAYSAPVAAATA). H118 provides a ligand contact to chlorophyll a. Y126 contacts pheophytin a. The [CaMn4O5] cluster site is built by D170 and E189. Residues 197-218 (FHMLGVAGVFGGSLFSAMHGSL) form a helical membrane-spanning segment. Position 198 (H198) interacts with chlorophyll a. H215 contacts a quinone. The Fe cation site is built by H215 and H272. A helical membrane pass occupies residues 274–288 (FLAAWPVVGIWFTAL). [CaMn4O5] cluster is bound by residues H332, E333, D342, and A344. Residues 345–353 (AVEAPSING) constitute a propeptide that is removed on maturation.

The protein belongs to the reaction center PufL/M/PsbA/D family. As to quaternary structure, PSII is composed of 1 copy each of membrane proteins PsbA, PsbB, PsbC, PsbD, PsbE, PsbF, PsbH, PsbI, PsbJ, PsbK, PsbL, PsbM, PsbT, PsbX, PsbY, PsbZ, Psb30/Ycf12, at least 3 peripheral proteins of the oxygen-evolving complex and a large number of cofactors. It forms dimeric complexes. The D1/D2 heterodimer binds P680, chlorophylls that are the primary electron donor of PSII, and subsequent electron acceptors. It shares a non-heme iron and each subunit binds pheophytin, quinone, additional chlorophylls, carotenoids and lipids. D1 provides most of the ligands for the Mn4-Ca-O5 cluster of the oxygen-evolving complex (OEC). There is also a Cl(-1) ion associated with D1 and D2, which is required for oxygen evolution. The PSII complex binds additional chlorophylls, carotenoids and specific lipids. is required as a cofactor. Tyr-161 forms a radical intermediate that is referred to as redox-active TyrZ, YZ or Y-Z. Post-translationally, C-terminally processed by CTPA; processing is essential to allow assembly of the oxygen-evolving complex and thus photosynthetic growth.

It localises to the plastid. The protein resides in the chloroplast thylakoid membrane. The catalysed reaction is 2 a plastoquinone + 4 hnu + 2 H2O = 2 a plastoquinol + O2. In terms of biological role, photosystem II (PSII) is a light-driven water:plastoquinone oxidoreductase that uses light energy to abstract electrons from H(2)O, generating O(2) and a proton gradient subsequently used for ATP formation. It consists of a core antenna complex that captures photons, and an electron transfer chain that converts photonic excitation into a charge separation. The D1/D2 (PsbA/PsbD) reaction center heterodimer binds P680, the primary electron donor of PSII as well as several subsequent electron acceptors. The chain is Photosystem II protein D1 from Brassica napus (Rape).